Reading from the N-terminus, the 1027-residue chain is Fibril-forming collagen alpha chain (1027 aa).

Residues 1 to 12 (YRAGPRYIQAQV) form a nonhelical region (N-terminal) region. A disordered region spans residues 1–1027 (YRAGPRYIQA…GPPGNSDYGA (1027 aa)). The segment at 13-1023 (GPIGPRGPPG…PGPPGPPGNS (1011 aa)) is triple-helical region. Positions 17-26 (PRGPPGPPGS) are enriched in pro residues. A 4-hydroxyproline; partial mark is found at P21 and P24. 4-hydroxyproline occurs at positions 27 and 39. P53 bears the 3-hydroxyproline; partial mark. P54 carries the post-translational modification 4-hydroxyproline. Residues 63 to 72 (SGDDGRDGEP) show a composition bias toward basic and acidic residues. P72 carries the 4-hydroxyproline; partial modification. Gly residues predominate over residues 73 to 91 (GPRGGIGPMGPRGAGGMPG). 2 positions are modified to 4-hydroxyproline: P90 and P93. A 5-hydroxylysine mark is found at K96 and K108. Residues K96 and K108 are each glycosylated (O-linked (Gal...) hydroxylysine). A 4-hydroxyproline; partial mark is found at P123 and P128. P150 carries the post-translational modification 4-hydroxyproline. P161 carries the post-translational modification 3-hydroxyproline; partial. At P162 the chain carries 4-hydroxyproline. Position 164 is a 3-hydroxyproline; partial (P164). A 4-hydroxyproline mark is found at P165, P174, P177, and P180. Residues 168 to 182 (IGSTGSPGFPGTPGS) are compositionally biased toward low complexity. 5-hydroxylysine is present on residues K183 and K192. A glycan (O-linked (Gal...) hydroxylysine) is linked at K192. A 4-hydroxyproline mark is found at P207, P216, P219, P228, and P237. Residues 227–249 (EPGASGESGLPGPSGFPGPRGMP) are compositionally biased toward low complexity. 4-hydroxyproline; partial is present on P243. 2 positions are modified to 4-hydroxyproline: P249 and P255. A compositionally biased stretch (gly residues) spans 259-268 (GAKGDGGPTG). Position 261 is a 5-hydroxylysine (K261). O-linked (Gal...) hydroxylysine glycosylation is present at K261. 4-hydroxyproline; partial occurs at positions 273 and 276. K279 carries the 5-hydroxylysine modification. O-linked (Gal...) hydroxylysine glycosylation occurs at K279. P285, P291, and P303 each carry 4-hydroxyproline; partial. P306, P312, P321, P327, and P339 each carry 4-hydroxyproline. Position 342 is a 5-hydroxylysine (K342). Residue P348 is modified to 4-hydroxyproline; partial. Position 351 is a 5-hydroxylysine; partial (K351). A 4-hydroxyproline mark is found at P366, P372, and P375. Residues 380 to 396 (RPGKDGRPGIRGKDGKQ) are compositionally biased toward basic and acidic residues. P381 carries the post-translational modification 4-hydroxyproline; partial. At P387 the chain carries 4-hydroxyproline. The span at 398 to 420 (EQGPQGPQGLAGLQGRAGPPGAR) shows a compositional bias: low complexity. At P416 the chain carries 3-hydroxyproline; partial. A 4-hydroxyproline mark is found at P417, P423, P429, and P432. The segment covering 437-446 (EQGDAGKDGE) has biased composition (basic and acidic residues). Over residues 447 to 480 (TGAAGPPGAAGPTGARGPPGPRGQQGFQGLAGAQ) the composition is skewed to low complexity. Residues P453, P465, and P483 each carry the 4-hydroxyproline modification. P500, P503, and P506 each carry 4-hydroxyproline; partial. The span at 502-511 (GPAGPGGERG) shows a compositional bias: gly residues. 2 positions are modified to 4-hydroxyproline: P513 and P525. Residues 527 to 543 (ERGATGPAGPTGSPGVA) show a composition bias toward low complexity. 4-hydroxyproline; partial occurs at positions 533 and 536. P540 bears the 4-hydroxyproline mark. K546 is modified (5-hydroxylysine). At P551 the chain carries 3-hydroxyproline; partial. 4-hydroxyproline is present on residues P552 and P561. K567 and K573 each carry 5-hydroxylysine. An O-linked (Gal...) hydroxylysine glycan is attached at K573. Basic and acidic residues predominate over residues 575–599 (SRGDIGPRGKAGERGKDGERGERGE). A 4-hydroxyproline modification is found at P603. K612 bears the 5-hydroxylysine mark. O-linked (Gal...) hydroxylysine glycosylation occurs at K612. P621 carries the 4-hydroxyproline; partial modification. P627 bears the 4-hydroxyproline mark. The span at 635–644 (PAGSQGIQGQ) shows a compositional bias: low complexity. At P645 the chain carries 4-hydroxyproline; partial. At P647 the chain carries 3-hydroxyproline; partial. P648 is modified (4-hydroxyproline). 5-hydroxylysine is present on K657. O-linked (Gal...) hydroxylysine glycosylation occurs at K657. 6 positions are modified to 4-hydroxyproline: P663, P708, P711, P714, P717, and P723. A compositionally biased stretch (low complexity) spans 698 to 710 (ETGAQGEIGLPGS). Residues 714 to 726 (PGLPGPSGQPGPS) are compositionally biased toward pro residues. 5-hydroxylysine is present on K738. K738 carries O-linked (Gal...) hydroxylysine glycosylation. A 4-hydroxyproline mark is found at P744 and P759. Residues 750 to 771 (QGDRGSDGEPGRDGTKGERGED) are compositionally biased toward basic and acidic residues. Residue K765 is modified to 5-hydroxylysine. Residue K765 is glycosylated (O-linked (Gal...) hydroxylysine). P773 carries the 3-hydroxyproline; partial modification. 3 positions are modified to 4-hydroxyproline: P774, P783, and P792. A compositionally biased stretch (gly residues) spans 802-814 (GPMGGQGMKGDGG). Residue K810 is modified to 5-hydroxylysine. Residue K810 is glycosylated (O-linked (Gal...) hydroxylysine). 3-hydroxyproline; partial is present on P815. P816, P843, P849, P855, P861, P867, P888, P894, P903, and P915 each carry 4-hydroxyproline. Positions 828-848 (AGPQGPTGPSGQAGAPGQEGA) are enriched in low complexity. The span at 884–894 (QRGLPGAAGPP) shows a compositional bias: low complexity. The segment covering 911-927 (PVGAPGSQGPAGIMGMK) has biased composition (low complexity). At K927 the chain carries 5-hydroxylysine. K927 carries O-linked (Gal...) hydroxylysine glycosylation. At K933 the chain carries 5-hydroxylysine; partial. K936 and K939 each carry 5-hydroxylysine. Residue K936 is glycosylated (O-linked (Gal...) hydroxylysine). The segment covering 942–962 (TGLPGLQGLQGTPGHSGESGP) has biased composition (low complexity). P945 is modified (4-hydroxyproline). P954 is subject to 4-hydroxyproline; partial. 4-hydroxyproline occurs at positions 963 and 966. The span at 973–982 (GEAGGRGSQG) shows a compositional bias: gly residues. Residues 983-1001 (PPGKDGQPGPSGRVGPRGP) show a composition bias toward low complexity. 4-hydroxyproline occurs at positions 984 and 990. P1010 carries the post-translational modification 3-hydroxyproline; partial. The segment covering 1010-1020 (PPGPPGPPGPP) has biased composition (pro residues). P1011 carries the 4-hydroxyproline modification. P1013 bears the 3-hydroxyproline; partial mark. Residue P1014 is modified to 4-hydroxyproline. The residue at position 1016 (P1016) is a 3-hydroxyproline; partial. P1017 is modified (4-hydroxyproline). P1019 bears the 3-hydroxyproline; partial mark. P1020 is modified (4-hydroxyproline). The nonhelical region (C-terminal) stretch occupies residues 1024 to 1027 (DYGA).

Homotetramer.

The protein localises to the secreted. It is found in the extracellular space. The protein resides in the extracellular matrix. Fibril-forming collagen. In Riftia pachyptila (Vent tube worm), this protein is Fibril-forming collagen alpha chain.